The following is a 177-amino-acid chain: Olfactory protein (177 aa).

An N-terminal signal peptide occupies residues 1 to 17; the sequence is MIRIIAIVVLFFLQCQA. Cys-81 and Cys-174 form a disulfide bridge.

This sequence belongs to the calycin superfamily. Lipocalin family. As to expression, synthesized in Bowman glands, which secrete the mucus that bathes the cilia of the olfactory neuroepithelium.

It is found in the secreted. The chain is Olfactory protein from Lithobates pipiens (Northern leopard frog).